Here is a 1075-residue protein sequence, read N- to C-terminus: DNA-directed RNA polymerase subunit beta (1075 aa).

It belongs to the RNA polymerase beta chain family. In plastids the minimal PEP RNA polymerase catalytic core is composed of four subunits: alpha, beta, beta', and beta''. When a (nuclear-encoded) sigma factor is associated with the core the holoenzyme is formed, which can initiate transcription.

The protein localises to the plastid. The protein resides in the chloroplast. The enzyme catalyses RNA(n) + a ribonucleoside 5'-triphosphate = RNA(n+1) + diphosphate. In terms of biological role, DNA-dependent RNA polymerase catalyzes the transcription of DNA into RNA using the four ribonucleoside triphosphates as substrates. This Saccharum officinarum (Sugarcane) protein is DNA-directed RNA polymerase subunit beta.